The chain runs to 200 residues: ATP synthase subunit s, mitochondrial (200 aa).

The transit peptide at 1 to 25 directs the protein to the mitochondrion; sequence MMLFGKISQQLCGVKKLPWSCDSRY. Positions 1-61 are N-terminal domain; that stretch reads MMLFGKISQQ…SEWLLRCGAM (61 aa). Glycine 59 contributes to the Mg(2+) binding site. 4 LRR repeats span residues 62 to 87, 88 to 116, 117 to 141, and 142 to 173; these read VRYH…KYKI, QAID…KIRL, CKCH…KTIL, and EMEI…LSDL. Mg(2+) is bound at residue threonine 93.

Belongs to the ATP synthase subunit s family. Homotetramer. Associates with ATP synthase.

The protein resides in the mitochondrion. The protein localises to the mitochondrion inner membrane. In terms of biological role, involved in regulation of mitochondrial membrane ATP synthase. Necessary for H(+) conduction of ATP synthase. Facilitates energy-driven catalysis of ATP synthesis by blocking a proton leak through an alternative proton exit pathway. This Pongo abelii (Sumatran orangutan) protein is ATP synthase subunit s, mitochondrial (DMAC2L).